The following is a 129-amino-acid chain: D-ribose pyranase 1 (129 aa).

His20 serves as the catalytic Proton donor. Residues Asp28, His96, and 118 to 120 (YSN) each bind substrate.

The protein belongs to the RbsD / FucU family. RbsD subfamily. Homodecamer.

The protein resides in the cytoplasm. It catalyses the reaction beta-D-ribopyranose = beta-D-ribofuranose. Its pathway is carbohydrate metabolism; D-ribose degradation; D-ribose 5-phosphate from beta-D-ribopyranose: step 1/2. Its function is as follows. Catalyzes the interconversion of beta-pyran and beta-furan forms of D-ribose. In Rubrobacter xylanophilus (strain DSM 9941 / JCM 11954 / NBRC 16129 / PRD-1), this protein is D-ribose pyranase 1.